A 225-amino-acid chain; its full sequence is PKHD-type hydroxylase YbiX (225 aa).

The region spanning 78–177 is the Fe2OG dioxygenase domain; sequence TLSTPLFNRY…RVASFMWIQS (100 aa). Fe cation contacts are provided by His96, Asp98, and His158. Residue Arg168 coordinates 2-oxoglutarate.

Fe(2+) serves as cofactor. L-ascorbate is required as a cofactor.

The polypeptide is PKHD-type hydroxylase YbiX (Escherichia coli (strain SMS-3-5 / SECEC)).